We begin with the raw amino-acid sequence, 371 residues long: Dihydroorotate dehydrogenase (quinone) (371 aa).

Residues alanine 79–lysine 83 and threonine 103 contribute to the FMN site. Lysine 83 serves as a coordination point for substrate. Substrate is bound at residue asparagine 128–phenylalanine 132. The FMN site is built by asparagine 156 and asparagine 189. Asparagine 189 is a substrate binding site. The Nucleophile role is filled by serine 192. Asparagine 194 lines the substrate pocket. Residues lysine 225 and threonine 253 each contribute to the FMN site. Residue asparagine 254–threonine 255 coordinates substrate. Residues glycine 279, glycine 308, and tyrosine 329–threonine 330 contribute to the FMN site.

Belongs to the dihydroorotate dehydrogenase family. Type 2 subfamily. Monomer. Requires FMN as cofactor.

It localises to the cell membrane. The catalysed reaction is (S)-dihydroorotate + a quinone = orotate + a quinol. It functions in the pathway pyrimidine metabolism; UMP biosynthesis via de novo pathway; orotate from (S)-dihydroorotate (quinone route): step 1/1. Functionally, catalyzes the conversion of dihydroorotate to orotate with quinone as electron acceptor. In Corynebacterium glutamicum (strain ATCC 13032 / DSM 20300 / JCM 1318 / BCRC 11384 / CCUG 27702 / LMG 3730 / NBRC 12168 / NCIMB 10025 / NRRL B-2784 / 534), this protein is Dihydroorotate dehydrogenase (quinone).